We begin with the raw amino-acid sequence, 472 residues long: Sulfate adenylyltransferase subunit 1 (472 aa).

In terms of domain architecture, tr-type G spans 22-239 (KELLRFLTCG…TVPIAGDKNY (218 aa)). Residues 31–38 (GSVDDGKS) are G1. GTP is bound at residue 31-38 (GSVDDGKS). A G2 region spans residues 89 to 93 (GITID). A G3 region spans residues 110–113 (DTPG). GTP-binding positions include 110-114 (DTPGH) and 165-168 (NKMD). Residues 165–168 (NKMD) form a G4 region. A G5 region spans residues 202–204 (SAL).

Belongs to the TRAFAC class translation factor GTPase superfamily. Classic translation factor GTPase family. CysN/NodQ subfamily. In terms of assembly, heterodimer composed of CysD, the smaller subunit, and CysN.

The enzyme catalyses sulfate + ATP + H(+) = adenosine 5'-phosphosulfate + diphosphate. The protein operates within sulfur metabolism; hydrogen sulfide biosynthesis; sulfite from sulfate: step 1/3. With CysD forms the ATP sulfurylase (ATPS) that catalyzes the adenylation of sulfate producing adenosine 5'-phosphosulfate (APS) and diphosphate, the first enzymatic step in sulfur assimilation pathway. APS synthesis involves the formation of a high-energy phosphoric-sulfuric acid anhydride bond driven by GTP hydrolysis by CysN coupled to ATP hydrolysis by CysD. In Cellvibrio japonicus (strain Ueda107) (Pseudomonas fluorescens subsp. cellulosa), this protein is Sulfate adenylyltransferase subunit 1.